We begin with the raw amino-acid sequence, 222 residues long: Glutathione S-transferase A1 (222 aa).

Position 1 is an N-acetylmethionine (M1). A2 carries the post-translational modification N-acetylalanine; in Glutathione S-transferase A1, N-terminally processed. The 81-residue stretch at 3–83 folds into the GST N-terminal domain; that stretch reads GKPTLHYFNG…YIATKYNLYG (81 aa). K4 is subject to N6-succinyllysine. Residues Y9, K45, 54–55, and 67–68 contribute to the glutathione site; these read QV and QT. The GST C-terminal domain occupies 85–208; it reads DMKERALIDM…QPGSQRKPPT (124 aa).

This sequence belongs to the GST superfamily. Alpha family. Homodimer or heterodimer of GSTA1 and GSTA2. As to expression, expressed in corpus luteum, adrenal gland, testis, liver, lung, thyroid and kidney.

The protein localises to the cytoplasm. The catalysed reaction is RX + glutathione = an S-substituted glutathione + a halide anion + H(+). It carries out the reaction prostaglandin A2 + glutathione = prostaglandin A2-S-(R)-glutathione. It catalyses the reaction prostaglandin J2 + glutathione = prostaglandin J2-S-(R)-glutathione. The enzyme catalyses (13S)-hydroperoxy-(9Z,11E)-octadecadienoate + 2 glutathione = (13S)-hydroxy-(9Z,11E)-octadecadienoate + glutathione disulfide + H2O. The catalysed reaction is androst-5-ene-3,17-dione = androst-4-ene-3,17-dione. Glutathione S-transferase that catalyzes the nucleophilic attack of the sulfur atom of glutathione on the electrophilic groups of a wide range of exogenous and endogenous compounds. Involved in the formation of glutathione conjugates of both prostaglandin A2 (PGA2) and prostaglandin J2 (PGJ2). It also catalyzes the isomerization of D5-androstene-3,17-dione (AD) into D4-androstene-3,17-dione and may therefore play an important role in hormone biosynthesis. Through its glutathione-dependent peroxidase activity toward the fatty acid hydroperoxide (13S)-hydroperoxy-(9Z,11E)-octadecadienoate/13-HPODE it is also involved in the metabolism of oxidized linoleic acid. This is Glutathione S-transferase A1 (GSTA1) from Bos taurus (Bovine).